The primary structure comprises 340 residues: NAD kinase (340 aa).

Catalysis depends on D66, which acts as the Proton acceptor. Residues 66 to 67 (DG), R71, 141 to 142 (ND), K152, D171, 182 to 187 (TAYAFS), and A206 contribute to the NAD(+) site. The segment at 321-340 (AGVAGTEPDKPGERDGKAGS) is disordered. The span at 327–340 (EPDKPGERDGKAGS) shows a compositional bias: basic and acidic residues.

Belongs to the NAD kinase family. A divalent metal cation serves as cofactor.

Its subcellular location is the cytoplasm. It catalyses the reaction NAD(+) + ATP = ADP + NADP(+) + H(+). Its function is as follows. Involved in the regulation of the intracellular balance of NAD and NADP, and is a key enzyme in the biosynthesis of NADP. Catalyzes specifically the phosphorylation on 2'-hydroxyl of the adenosine moiety of NAD to yield NADP. This Bifidobacterium longum (strain DJO10A) protein is NAD kinase.